A 1367-amino-acid chain; its full sequence is Collagen alpha-1(XV) chain (1367 aa).

The signal sequence occupies residues 1-31 (MTHRRTAQGRRPRWLLSIISALLSAVLQTRA). A Laminin G-like domain is found at 54–249 (SVSFTTGYGG…SSASGEASGF (196 aa)). Positions 229-604 (RTPEELCEAQ…DIVGNEDLLR (376 aa)) are nonhelical region 1 (NC1). S243 and S247 each carry an O-linked (Xyl...) (chondroitin sulfate) serine glycan. Positions 267 to 319 (APPKESHVDPISVPPTSSSPAEDSELSGEPVPEGTPETNLSIIGHSSPEQGSG) are disordered. 2 N-linked (GlcNAc...) asparagine glycosylation sites follow: N305 and N323. Residue S341 is glycosylated (O-linked (Xyl...) (chondroitin sulfate) serine). N-linked (GlcNAc...) asparagine glycosylation is found at N348, N375, and N402. Disordered stretches follow at residues 396-446 (DTPD…SHGE) and 529-784 (TAEP…GHVE). The span at 402–429 (NLTTTASGDGEVPTSTDGDTEADSSPTG) shows a compositional bias: polar residues. A compositionally biased stretch (basic and acidic residues) spans 434–446 (KPREEATLGSHGE). Residues 555–564 (PSGPPLPTPT) show a composition bias toward pro residues. A compositionally biased stretch (gly residues) spans 582–595 (GPVGGLDEGSGSGD). 2 consecutive Collagen-like domains span residues 605–665 (GPPG…GMKG) and 666–717 (EKGA…PPGP). The tract at residues 605 to 718 (GPPGPPGPPG…PGPPGPPGPG (114 aa)) is triple-helical region 1 (COL1). Residues 606–616 (PPGPPGPPGSP) are compositionally biased toward pro residues. The N-linked (GlcNAc...) asparagine glycan is linked to N673. Over residues 703–717 (MGPPGPPGPPGPPGP) the composition is skewed to pro residues. The segment at 719-748 (CTTELGFEIEGSGDVRLLSKPTISGPTSPS) is nonhelical region 2 (NC2). An O-linked (Xyl...) (chondroitin sulfate) serine glycan is attached at S730. The segment covering 737-750 (SKPTISGPTSPSGP) has biased composition (low complexity). A triple-helical region 2 (COL2) region spans residues 749–783 (GPKGEKGEQGAKGERGADGTSTMGPPGPRGPPGHV). The span at 751-765 (KGEKGEQGAKGERGA) shows a compositional bias: basic and acidic residues. The nonhelical region 3 (NC3) stretch occupies residues 784 to 807 (EVLSSSLINITNGSMNFSDIPELM). N-linked (GlcNAc...) asparagine glycosylation is found at N792, N795, and N799. Collagen-like domains lie at 808-850 (GPPG…GEPG) and 863-912 (KGRK…GDRG). The interval 808–852 (GPPGPDGVPGLPGFPGPRGPKGDTGVPGFPGLKGEQGEKGEPGAI) is triple-helical region 3 (COL3). The tract at residues 853-863 (LTGDVPLEMMK) is nonhelical region 4 (NC4). The segment at 864–934 (GRKGEPGIHG…PGPPGPPGAV (71 aa)) is triple-helical region 4 (COL4). Residues 905–930 (KGAKGDRGVTLPGPPGLPGPPGPPGP) form a disordered region. Pro residues predominate over residues 916 to 930 (PGPPGLPGPPGPPGP). Residues 935–968 (VNIKGAVFPIPARPHCKTPVGTAHPGDPELVTFH) are nonhelical region 5 (NC5). The tract at residues 969 to 998 (GVKGEKGSWGLPGSKGEKGDQGAQGPPGPP) is triple-helical region 5 (COL5). Disordered stretches follow at residues 974–1000 (KGSW…PPVD) and 1055–1089 (GPPG…PAIL). A nonhelical region 6 (NC6) region spans residues 999–1031 (VDPAYLRHFLNSLKGENEDASFRGESSNNLFVS). Positions 1032–1086 (GPPGLPGYPGLVGQKGEAVVGPQGPPGIPGLPGPPGFGRPGVPGPPGPPGPPGPP) are triple-helical region 6 (COL6). Pro residues predominate over residues 1055 to 1086 (GPPGIPGLPGPPGFGRPGVPGPPGPPGPPGPP). Positions 1087–1096 (AILGAAVALP) are nonhelical region 7 (NC7). Residues 1097–1111 (GPPGPPGQPGLPGSR) are triple-helical region 7 (COL7). The segment at 1112–1367 (NLVTALSDMG…ENSFMTDTRK (256 aa)) is nonhelical region 8 (NC8). 2 cysteine pairs are disulfide-bonded: C1216–C1356 and C1318–C1348.

The protein belongs to the multiplexin collagen family. As to quaternary structure, trimer; disulfide-linked. Interacts moderately with EFEMP2. In terms of processing, prolines at the third position of the tripeptide repeating unit (G-X-Y) are hydroxylated in some or all of the chains. O-glycosylated; contains chondroitin sulfate. As to expression, detected in testis, brain, heart, kidney, skeletal muscle and skin (at protein level). Detected in heart and skeletal muscle.

It localises to the secreted. It is found in the extracellular space. The protein resides in the extracellular matrix. Structural protein that stabilizes microvessels and muscle cells, both in heart and in skeletal muscle. In terms of biological role, restin potently inhibits angiogenesis. The sequence is that of Collagen alpha-1(XV) chain (Col15a1) from Mus musculus (Mouse).